The primary structure comprises 154 residues: 6,7-dimethyl-8-ribityllumazine synthase (154 aa).

5-amino-6-(D-ribitylamino)uracil is bound by residues F23, 57 to 59, and 81 to 83; these read AYE and AVI. (2S)-2-hydroxy-3-oxobutyl phosphate is bound at residue 86-87; that stretch reads GT. Residue H89 is the Proton donor of the active site. Position 114 (F114) interacts with 5-amino-6-(D-ribitylamino)uracil. R128 contacts (2S)-2-hydroxy-3-oxobutyl phosphate.

It belongs to the DMRL synthase family. As to quaternary structure, forms an icosahedral capsid composed of 60 subunits, arranged as a dodecamer of pentamers.

The catalysed reaction is (2S)-2-hydroxy-3-oxobutyl phosphate + 5-amino-6-(D-ribitylamino)uracil = 6,7-dimethyl-8-(1-D-ribityl)lumazine + phosphate + 2 H2O + H(+). It functions in the pathway cofactor biosynthesis; riboflavin biosynthesis; riboflavin from 2-hydroxy-3-oxobutyl phosphate and 5-amino-6-(D-ribitylamino)uracil: step 1/2. Functionally, catalyzes the formation of 6,7-dimethyl-8-ribityllumazine by condensation of 5-amino-6-(D-ribitylamino)uracil with 3,4-dihydroxy-2-butanone 4-phosphate. This is the penultimate step in the biosynthesis of riboflavin. The chain is 6,7-dimethyl-8-ribityllumazine synthase from Acidithiobacillus ferrooxidans (strain ATCC 23270 / DSM 14882 / CIP 104768 / NCIMB 8455) (Ferrobacillus ferrooxidans (strain ATCC 23270)).